The primary structure comprises 555 residues: Glutamate--tRNA ligase (555 aa).

The 'HIGH' region motif lies at 100–110 (PNPSGPLHIGH).

Belongs to the class-I aminoacyl-tRNA synthetase family. Glutamate--tRNA ligase type 2 subfamily.

It is found in the cytoplasm. The catalysed reaction is tRNA(Glu) + L-glutamate + ATP = L-glutamyl-tRNA(Glu) + AMP + diphosphate. Functionally, catalyzes the attachment of glutamate to tRNA(Glu) in a two-step reaction: glutamate is first activated by ATP to form Glu-AMP and then transferred to the acceptor end of tRNA(Glu). This is Glutamate--tRNA ligase from Methanococcus maripaludis (strain DSM 14266 / JCM 13030 / NBRC 101832 / S2 / LL).